The sequence spans 821 residues: Tip elongation aberrant protein Tea4 (821 aa).

Polar residues-rich tracts occupy residues 1–11 (MLHMNSASSAD) and 21–31 (DPTQQNDSTII). The segment at 1 to 36 (MLHMNSASSADSMEIMESHFDPTQQNDSTIIESRYS) is disordered. A Phosphotyrosine modification is found at tyrosine 35. The residue at position 36 (serine 36) is a Phosphoserine. Residue tyrosine 40 is modified to Phosphotyrosine. The tract at residues 51 to 79 (ISGENSEPQTVASQEISDSQEEDTTLTSS) is disordered. Positions 53-67 (GENSEPQTVASQEIS) are enriched in polar residues. One can recognise an SH3 domain in the interval 130–191 (IDCNFVHAIR…PAEYIETPSE (62 aa)). Disordered regions lie at residues 267–292 (LEIEFSDSSDSSLSAEYRSESEDHVT), 333–352 (SSTTADSKNSHSPYSKFSSA), 473–500 (DSFDTSNVTQDAPNDVEKEPISGQMPNN), 529–570 (SPRL…SSLL), and 664–697 (DASSAIPSSSISHDEDLLPRKNTEESTSSSSFSS). The span at 268-282 (EIEFSDSSDSSLSAE) shows a compositional bias: low complexity. Residues 283–292 (YRSESEDHVT) show a composition bias toward basic and acidic residues. 2 stretches are compositionally biased toward polar residues: residues 333-350 (SSTTADSKNSHSPYSKFS) and 473-484 (DSFDTSNVTQDA). The tract at residues 527–821 (LLSPRLYSSS…EMASLLNTNR (295 aa)) is interaction with tea1. Residues 529–541 (SPRLYSSSTPSSP) show a composition bias toward low complexity. The segment covering 554–563 (ENRKQADKVE) has biased composition (basic and acidic residues). Residues 599 to 821 (KAFSQSSIDL…EMASLLNTNR (223 aa)) are interaction with win1. Residues 665–674 (ASSAIPSSSI) are compositionally biased toward low complexity. Over residues 675–687 (SHDEDLLPRKNTE) the composition is skewed to basic and acidic residues.

As to quaternary structure, an essential component of the tea1 cell-end complex. Interacts with win1, tea1 and for3. Interacts with tip1 in the presence of tea1.

Its subcellular location is the cytoplasm. It is found in the cytoskeleton. Its function is as follows. Cell polarity factor essential for the bipolar localization and function of structures containing the cell-end marker tea1 during the normal cell cycle. Regulates cell polarity in complex with tea1 and together with the stress signaling MAPK cascade, contributes to cell polarity maintenance under stress conditions. Required for the localization of for3 at the cell tip specifically during initiation of bipolar growth. During the new end take off (NETO), formation of a protein complex that includes tea1, tea4 and for3 is necessary and sufficient for the establishment of cell polarity and localized actin assembly at new cell ends. This chain is Tip elongation aberrant protein Tea4, found in Schizosaccharomyces pombe (strain 972 / ATCC 24843) (Fission yeast).